The sequence spans 411 residues: Glutamate dehydrogenase A (411 aa).

The active site involves Lys-102.

It belongs to the Glu/Leu/Phe/Val dehydrogenases family.

It carries out the reaction L-glutamate + NAD(+) + H2O = 2-oxoglutarate + NH4(+) + NADH + H(+). It catalyses the reaction L-glutamate + NADP(+) + H2O = 2-oxoglutarate + NH4(+) + NADPH + H(+). The polypeptide is Glutamate dehydrogenase A (GDHA) (Nicotiana plumbaginifolia (Leadwort-leaved tobacco)).